A 287-amino-acid polypeptide reads, in one-letter code: ATP synthase gamma chain (287 aa).

Belongs to the ATPase gamma chain family. F-type ATPases have 2 components, CF(1) - the catalytic core - and CF(0) - the membrane proton channel. CF(1) has five subunits: alpha(3), beta(3), gamma(1), delta(1), epsilon(1). CF(0) has three main subunits: a, b and c.

The protein resides in the cell inner membrane. In terms of biological role, produces ATP from ADP in the presence of a proton gradient across the membrane. The gamma chain is believed to be important in regulating ATPase activity and the flow of protons through the CF(0) complex. This Proteus mirabilis (strain HI4320) protein is ATP synthase gamma chain.